The sequence spans 147 residues: MGRLMGLDVGSRTVGVAVSDMLGWTAQGVEIVQINEDEQEFGLDRIAELVKENEVVGFVLGLPKNMNNTSGPRVEAAKAYGELLEEKFNLPIDFIDERLTTVEAERMLVEQADASRKKRKKVIDKLAASLILQNYLDAKGKLLKELN.

Belongs to the YqgF nuclease family.

Its subcellular location is the cytoplasm. Functionally, could be a nuclease involved in processing of the 5'-end of pre-16S rRNA. The polypeptide is Putative pre-16S rRNA nuclease (Ligilactobacillus salivarius (strain UCC118) (Lactobacillus salivarius)).